Here is a 243-residue protein sequence, read N- to C-terminus: Cysteine-rich secretory protein 2 (243 aa).

Residues 1–21 (MALLPVLFLVTVLLPSLPAEG) form the signal peptide. One can recognise an SCP domain in the interval 41-169 (VNKHNELRKA…SLKYYYVCQY (129 aa)). 5 disulfides stabilise this stretch: Cys189/Cys196, Cys192/Cys201, Cys205/Cys238, Cys214/Cys232, and Cys223/Cys236. The ShKT domain maps to 205–238 (CQYQDLLSNCDSLKNTAGCEHELLKEKCKATCLC).

It belongs to the CRISP family. Interacts with NSUN4 isoform 3. In terms of tissue distribution, testis and epididymis.

It is found in the secreted. Functionally, may regulate some ion channels' activity and thereby regulate calcium fluxes during sperm capacitation. In Homo sapiens (Human), this protein is Cysteine-rich secretory protein 2 (CRISP2).